The following is a 610-amino-acid chain: Ecto-NOX disulfide-thiol exchanger 2 (610 aa).

The RRM domain occupies 128–207; the sequence is KTVFVGGLPE…GRLHVDFAQA (80 aa). Coiled coils occupy residues 293 to 328 and 381 to 505; these read IQSA…LSGI and RREE…KESC.

Belongs to the ENOX family. Cu cation is required as a cofactor. In terms of processing, glycosylated. As to expression, found in the sera of cancer patients with a wide variety of cancers including breast, prostate, lung and ovarian cancers, leukemias, and lymphomas. Not found in the serum of healthy volunteers or patients with disorders other than cancer. Probably shed into serum by cancer cells. Found on the cell borders of renal, kidney and ovarian carcinomas but not on the borders of surrounding non-cancerous stromal cells.

The protein resides in the cell membrane. The protein localises to the secreted. Its subcellular location is the extracellular space. Its activity is regulated as follows. Inhibited by the antitumor sulfonylurea LY181984, the vabilloid capsaicin, and retinoids. In terms of biological role, may be involved in cell growth. Probably acts as a terminal oxidase of plasma electron transport from cytosolic NAD(P)H via hydroquinones to acceptors at the cell surface. Hydroquinone oxidase activity alternates with a protein disulfide-thiol interchange/oxidoreductase activity which may control physical membrane displacements associated with vesicle budding or cell enlargement. The activities oscillate with a period length of 22 minutes and play a role in control of the ultradian cellular biological clock. The sequence is that of Ecto-NOX disulfide-thiol exchanger 2 (ENOX2) from Homo sapiens (Human).